Reading from the N-terminus, the 405-residue chain is L-rhamnonate dehydratase (405 aa).

2 residues coordinate substrate: His-33 and Arg-59. Mg(2+) contacts are provided by Asp-226, Glu-252, and Glu-280. His-329 acts as the Proton acceptor in catalysis. Glu-349 contacts substrate.

Belongs to the mandelate racemase/muconate lactonizing enzyme family. RhamD subfamily. In terms of assembly, homooctamer; tetramer of dimers. Requires Mg(2+) as cofactor.

It catalyses the reaction L-rhamnonate = 2-dehydro-3-deoxy-L-rhamnonate + H2O. Catalyzes the dehydration of L-rhamnonate to 2-keto-3-deoxy-L-rhamnonate (KDR). The sequence is that of L-rhamnonate dehydratase from Salmonella paratyphi A (strain AKU_12601).